Here is a 202-residue protein sequence, read N- to C-terminus: Small ribosomal subunit protein uS4c (202 aa).

The S4 RNA-binding domain occupies 90–152; sequence MRLDNLIFRL…AASKSLVNTY (63 aa).

Belongs to the universal ribosomal protein uS4 family. Part of the 30S ribosomal subunit. Contacts protein S5. The interaction surface between S4 and S5 is involved in control of translational fidelity.

It localises to the plastid. Its subcellular location is the chloroplast. In terms of biological role, one of the primary rRNA binding proteins, it binds directly to 16S rRNA where it nucleates assembly of the body of the 30S subunit. Functionally, with S5 and S12 plays an important role in translational accuracy. This chain is Small ribosomal subunit protein uS4c (rps4), found in Emiliania huxleyi (Coccolithophore).